The following is a 377-amino-acid chain: Nitric oxide reductase FlRd-NAD(+) reductase (377 aa).

This sequence belongs to the FAD-dependent oxidoreductase family. The cofactor is FAD.

The protein localises to the cytoplasm. The enzyme catalyses 2 reduced [nitric oxide reductase rubredoxin domain] + NAD(+) + H(+) = 2 oxidized [nitric oxide reductase rubredoxin domain] + NADH. The protein operates within nitrogen metabolism; nitric oxide reduction. In terms of biological role, one of at least two accessory proteins for anaerobic nitric oxide (NO) reductase. Reduces the rubredoxin moiety of NO reductase. The polypeptide is Nitric oxide reductase FlRd-NAD(+) reductase (Escherichia coli (strain SMS-3-5 / SECEC)).